The chain runs to 1101 residues: Error-prone DNA polymerase (1101 aa).

A disordered region spans residues 1055 to 1101; the sequence is ADLGHPMDSAVGQTTPQTDSAPRPRPQPRAMHPREQAKRLFPSRDFH. The segment covering 1065–1074 has biased composition (polar residues); the sequence is VGQTTPQTDS. Over residues 1086–1101 the composition is skewed to basic and acidic residues; that stretch reads HPREQAKRLFPSRDFH.

This sequence belongs to the DNA polymerase type-C family. DnaE2 subfamily.

It is found in the cytoplasm. The enzyme catalyses DNA(n) + a 2'-deoxyribonucleoside 5'-triphosphate = DNA(n+1) + diphosphate. In terms of biological role, DNA polymerase involved in damage-induced mutagenesis and translesion synthesis (TLS). It is not the major replicative DNA polymerase. This chain is Error-prone DNA polymerase, found in Ruegeria pomeroyi (strain ATCC 700808 / DSM 15171 / DSS-3) (Silicibacter pomeroyi).